Reading from the N-terminus, the 152-residue chain is Transcriptional repressor NrdR (152 aa).

Residues 1–21 form a disordered region; that stretch reads MRCPFCGNGDTQVKDSRPTED. Residues 3–34 fold into a zinc finger; that stretch reads CPFCGNGDTQVKDSRPTEDSAAIRRRRFCPAC. Basic and acidic residues predominate over residues 12–21; it reads QVKDSRPTED. Residues 49 to 139 enclose the ATP-cone domain; it reads LVIVKKDGQR…VYRNFREAKD (91 aa).

It belongs to the NrdR family. Zn(2+) serves as cofactor.

Functionally, negatively regulates transcription of bacterial ribonucleotide reductase nrd genes and operons by binding to NrdR-boxes. The protein is Transcriptional repressor NrdR of Rhodospirillum rubrum (strain ATCC 11170 / ATH 1.1.1 / DSM 467 / LMG 4362 / NCIMB 8255 / S1).